A 131-amino-acid chain; its full sequence is Profilin (131 aa).

The protein belongs to the profilin family. Occurs in many kinds of cells as a complex with monomeric actin in a 1:1 ratio.

The protein resides in the cytoplasm. Its subcellular location is the cytoskeleton. Binds to actin and affects the structure of the cytoskeleton. At high concentrations, profilin prevents the polymerization of actin, whereas it enhances it at low concentrations. By binding to PIP2, it inhibits the formation of IP3 and DG. The polypeptide is Profilin (Chenopodium album (Fat hen)).